A 374-amino-acid polypeptide reads, in one-letter code: Putative clathrin assembly protein At1g33340 (374 aa).

In terms of domain architecture, ENTH spans 30–163 (YNEKAFFDIE…GWIINQAGKL (134 aa)).

It is found in the membrane. Its subcellular location is the clathrin-coated pit. The protein localises to the golgi apparatus. The protein resides in the cytoplasmic vesicle. It localises to the clathrin-coated vesicle. The protein is Putative clathrin assembly protein At1g33340 of Arabidopsis thaliana (Mouse-ear cress).